Reading from the N-terminus, the 538-residue chain is MFS-type transporter oryC (538 aa).

6 helical membrane-spanning segments follow: residues 14–34 (LTGG…MSLF), 67–87 (TVTA…FTIG), 96–116 (ILLG…SFSL), 120–140 (FVGR…APIW), 162–182 (IFGF…GGSI), and 186–206 (FPLA…PWLP). N-linked (GlcNAc...) asparagine glycosylation occurs at Asn268. 6 helical membrane passes run 288–308 (FGGI…SVGL), 315–335 (LLAA…VLLV), 342–362 (GLML…TILL), 379–399 (VAFF…VPWL), 416–436 (VATA…PIGI), and 443–463 (FWIV…FLYP). A glycan (N-linked (GlcNAc...) asparagine) is linked at Asn467.

Belongs to the major facilitator superfamily. Sugar transporter (TC 2.A.1.1) family.

Its subcellular location is the membrane. MFS-type transporter; part of the gene cluster that mediates the biosynthesis of oryzines, natural products with an unusual maleidride backbone. The chain is MFS-type transporter oryC from Aspergillus oryzae (strain ATCC 42149 / RIB 40) (Yellow koji mold).